The following is a 323-amino-acid chain: rRNA 2'-O-methyltransferase fibrillarin (323 aa).

The interval 1–80 is disordered; that stretch reads MGFERGGRGG…AKGGAAGKKV (80 aa). 16 positions are modified to asymmetric dimethylarginine: Arg-5, Arg-8, Arg-12, Arg-16, Arg-23, Arg-26, Arg-30, Arg-34, Arg-41, Arg-47, Arg-49, Arg-53, Arg-57, Arg-62, Arg-64, and Arg-68. The span at 8–76 shows a compositional bias: gly residues; the sequence is RGGARGGGRG…ARGGAKGGAA (69 aa). Residues 174-175, 193-194, 218-219, and 238-241 contribute to the S-adenosyl-L-methionine site; these read TS, EF, DA, and DVAQ.

It belongs to the methyltransferase superfamily. Fibrillarin family. As to quaternary structure, component of box C/D small nucleolar ribonucleoprotein (snoRNP) particles. In terms of processing, by homology to other fibrillarins, some or all of the N-terminal domain arginines are modified to asymmetric dimethylarginine (DMA).

The protein resides in the nucleus. It is found in the nucleolus. The enzyme catalyses L-glutaminyl-[histone H2A] + S-adenosyl-L-methionine = N(5)-methyl-L-glutaminyl-[histone H2A] + S-adenosyl-L-homocysteine + H(+). In terms of biological role, S-adenosyl-L-methionine-dependent methyltransferase that has the ability to methylate both RNAs and proteins. Involved in pre-rRNA processing. Utilizes the methyl donor S-adenosyl-L-methionine to catalyze the site-specific 2'-hydroxyl methylation of ribose moieties in pre-ribosomal RNA. Site specificity is provided by a guide RNA that base pairs with the substrate. Methylation occurs at a characteristic distance from the sequence involved in base pairing with the guide RNA. Also acts as a protein methyltransferase by mediating methylation of 'Gln-105' of histone H2A (H2AQ105me), a modification that impairs binding of the FACT complex and is specifically present at 35S ribosomal DNA locus. The protein is rRNA 2'-O-methyltransferase fibrillarin (nop-1) of Neurospora crassa (strain ATCC 24698 / 74-OR23-1A / CBS 708.71 / DSM 1257 / FGSC 987).